The primary structure comprises 345 residues: MLTERQLLIFRAIIDHFTWTIQPVGSKNLLKEKGLPYSSATIRNEMGVLEEYGFIEKTHSSSGRVPSEKGYRFYVDYLLQPKKLDKSDRQMIRSFFSENYYEMEGLIQNSALMLSDLTNYTSILLGPEATKNHLSGFRFVPINNFQAMLILITDQGHVDNHLVTIPEGTTLSDIERMVNILNERLVGLSLDDLKVQIPMEVKELLGKHVRNYESFMHVFSDSFAQASQQKVYFGGKTNILNQPEFHDINKVREMLHLMEEEQDVYELFRDIPDGLQVKIGRENNNSLMEDCSIITATYNIAGERVGGIVLLGPTRMEYSRMMGLVDVMSRDLTDVLTKLYRDNQN.

It belongs to the HrcA family.

Its function is as follows. Negative regulator of class I heat shock genes (grpE-dnaK-dnaJ and groELS operons). Prevents heat-shock induction of these operons. This is Heat-inducible transcription repressor HrcA from Listeria monocytogenes serotype 1/2a (strain 10403S).